The following is a 212-amino-acid chain: ATP-dependent Clp protease proteolytic subunit (212 aa).

Ser114 serves as the catalytic Nucleophile. His139 is a catalytic residue.

Belongs to the peptidase S14 family. In terms of assembly, fourteen ClpP subunits assemble into 2 heptameric rings which stack back to back to give a disk-like structure with a central cavity, resembling the structure of eukaryotic proteasomes.

It is found in the cytoplasm. The enzyme catalyses Hydrolysis of proteins to small peptides in the presence of ATP and magnesium. alpha-casein is the usual test substrate. In the absence of ATP, only oligopeptides shorter than five residues are hydrolyzed (such as succinyl-Leu-Tyr-|-NHMec, and Leu-Tyr-Leu-|-Tyr-Trp, in which cleavage of the -Tyr-|-Leu- and -Tyr-|-Trp bonds also occurs).. Cleaves peptides in various proteins in a process that requires ATP hydrolysis. Has a chymotrypsin-like activity. Plays a major role in the degradation of misfolded proteins. The polypeptide is ATP-dependent Clp protease proteolytic subunit (Azoarcus sp. (strain BH72)).